The following is a 160-amino-acid chain: Large ribosomal subunit protein uL22c (160 aa).

Belongs to the universal ribosomal protein uL22 family. As to quaternary structure, part of the 50S ribosomal subunit.

It localises to the plastid. The protein resides in the chloroplast. Functionally, this protein binds specifically to 23S rRNA. The globular domain of the protein is located near the polypeptide exit tunnel on the outside of the subunit, while an extended beta-hairpin is found that lines the wall of the exit tunnel in the center of the 70S ribosome. In Capsella bursa-pastoris (Shepherd's purse), this protein is Large ribosomal subunit protein uL22c (rpl22).